Here is a 149-residue protein sequence, read N- to C-terminus: Transcriptional repressor NrdR (149 aa).

Residues cysteine 3–cysteine 34 fold into a zinc finger. The ATP-cone domain maps to proline 49–glutamate 139.

This sequence belongs to the NrdR family. Requires Zn(2+) as cofactor.

Functionally, negatively regulates transcription of bacterial ribonucleotide reductase nrd genes and operons by binding to NrdR-boxes. The sequence is that of Transcriptional repressor NrdR from Pectobacterium atrosepticum (strain SCRI 1043 / ATCC BAA-672) (Erwinia carotovora subsp. atroseptica).